Reading from the N-terminus, the 2383-residue chain is Reducing polyketide synthase rdc5 (2383 aa).

The 429-residue stretch at 10 to 438 folds into the Ketosynthase family 3 (KS3) domain; sequence RAPIAIIGMS…GTNAHLVLER (429 aa). Active-site for beta-ketoacyl synthase activity residues include cysteine 186, histidine 321, and histidine 361. The malonyl-CoA:ACP transacylase (MAT) domain stretch occupies residues 550-881; sequence FVFTGQGAQW…GFAAELFRRG (332 aa). Positions 930 to 1066 are N-terminal hotdog fold; the sequence is KSLIGAERPS…GLFSINYEDS (137 aa). The 324-residue stretch at 930–1253 folds into the PKS/mFAS DH domain; sequence KSLIGAERPS…LAELEVEDAD (324 aa). The segment at 932–1250 is dehydratase (DH) domain; sequence LIGAERPSLD…DFHLAELEVE (319 aa). Residue histidine 962 is the Proton acceptor; for dehydratase activity of the active site. The C-terminal hotdog fold stretch occupies residues 1094 to 1253; it reads VEVISKQAFY…LAELEVEDAD (160 aa). The active-site Proton donor; for dehydratase activity is the aspartate 1160. The tract at residues 1663–1977 is enoyl reductase (ER) domain; it reads GLLNTLHFVS…QGKHVGKMIL (315 aa). Cysteine 1776 (phosphocysteine intermediate) is an active-site residue. Positions 2002-2182 are ketoreductase (KR) domain; sequence ATYLFIGGLG…VSVNLGIMRD (181 aa). Residues 2300–2377 enclose the Carrier domain; that stretch reads AAGPIITKAL…QFAVQIAKKS (78 aa). Serine 2337 is subject to O-(pantetheine 4'-phosphoryl)serine.

Its pathway is secondary metabolite biosynthesis. Its function is as follows. Reducing polyketide synthase; part of the gene cluster that mediates the biosynthesis of radicicol, a resorcylic acid lactone (RAL) that irreversibly inhibits the HSP90 molecular chaperone, an important target for cancer chemotherapy. The radicicol cluster encodes only two apparent post-PKS enzymes, a cytochrome P450 monooxygenase (rdc4) and a non-heme halogenase (rdc2) that could introduce the epoxide and the chlorine, respectively. If this cluster includes all the genes required for radicicol biosynthesis, the remaining structural features of radicicol are presumably generated by the PKSs rdc1 and rdc5. The C-2' ketone could arise if the R-PKS rdc5 and NR-PKS rdc1 each carry out four iterations, in contrast to the five iteration-three iteration split for the hypothemycin PKSs. The origin of the cis 5',6' double bond is not known. The radicicol R-PKS rdc5 ER domain may catalyze either double bond isomerization or reduction in the third iteration. The protein is Reducing polyketide synthase rdc5 of Metacordyceps chlamydosporia (Nematophagous fungus).